Consider the following 343-residue polypeptide: Methylthioribose-1-phosphate isomerase (343 aa).

Residues 44 to 46 (RGA), Arg-85, and Gln-192 contribute to the substrate site. Asp-233 (proton donor) is an active-site residue. A substrate-binding site is contributed by 243–244 (NK).

It belongs to the eIF-2B alpha/beta/delta subunits family. MtnA subfamily.

The enzyme catalyses 5-(methylsulfanyl)-alpha-D-ribose 1-phosphate = 5-(methylsulfanyl)-D-ribulose 1-phosphate. The protein operates within amino-acid biosynthesis; L-methionine biosynthesis via salvage pathway; L-methionine from S-methyl-5-thio-alpha-D-ribose 1-phosphate: step 1/6. Catalyzes the interconversion of methylthioribose-1-phosphate (MTR-1-P) into methylthioribulose-1-phosphate (MTRu-1-P). In Carboxydothermus hydrogenoformans (strain ATCC BAA-161 / DSM 6008 / Z-2901), this protein is Methylthioribose-1-phosphate isomerase.